The sequence spans 194 residues: Cysteine and glycine-rich protein 3 (194 aa).

An interaction with TCAP region spans residues 1–5; it reads MPNWG. Residues 10–61 enclose the LIM zinc-binding 1 domain; that stretch reads CGACEKTVYHAEEIQCNGRSFHKTCFHCMACRKALDSTTVAAHESEIYCKVC. A Nuclear localization signal motif is present at residues 64–69; that stretch reads RRYGPK. The interaction with CLF2 and isoform 2 stretch occupies residues 94-105; the sequence is QSPKPARSVTTS. Residues serine 95 and serine 153 each carry the phosphoserine modification. The region spanning 120–171 is the LIM zinc-binding 2 domain; it reads CPRCGKSVYAAEKVMGGGKPWHKTCFRCAICGKSLESTNVTDKDGELYCKVC.

Self-associates. Oligomeric in the cytoplasm and monomeric in the nucleus. Homooligomers preferentially form along the actin cytoskeleton. Isoform 2 interacts with isoform 1. Isoform 1 but not isoform 2 interacts with MYOD1 and MYOG. Isoform 1 interacts with TCAP, ACTN2 and NRAP. Isoform 2 interacts with TCAP and alpha-actinin. Interacts with LDHD. Interacts (via N-terminus)with GLRX3 (via C-terminus) and PPP3CA; GLRX3 and calcineurin compete for interaction with CSRP3. Interacts with MYF6. Interacts with CFL2; the stoichiometry influences F-actin depolymerization and possibly two molecules of CFL2 can interact with one molecule of CSRP3 resulting in the highest functional impact; the interaction is stronger with phosphorylated CFL2. Phosphorylated by PKC/PRKCA. In terms of tissue distribution, cardiac and slow-twitch skeletal muscles. Isoform 2 is expressed in striated muscle. Isoform 2 is specifically expressed at higher levels in patients with neuromuscular diseases, such as limb-girdle muscular dystrophy 2A (LGMD2A), Duchenne muscular dystrophy (DMD) and dermatomyositis.

The protein resides in the nucleus. Its subcellular location is the cytoplasm. The protein localises to the cytoskeleton. It is found in the myofibril. It localises to the sarcomere. The protein resides in the z line. Functionally, positive regulator of myogenesis. Acts as a cofactor for myogenic bHLH transcription factors such as MYOD1, and probably MYOG and MYF6. Enhances the DNA-binding activity of the MYOD1:TCF3 isoform E47 complex and may promote formation of a functional MYOD1:TCF3 isoform E47:MEF2A complex involved in myogenesis. Plays a crucial and specific role in the organization of cytosolic structures in cardiomyocytes. Could play a role in mechanical stretch sensing. May be a scaffold protein that promotes the assembly of interacting proteins at Z-line structures. It is essential for calcineurin anchorage to the Z line. Required for stress-induced calcineurin-NFAT activation. The role in regulation of cytoskeleton dynamics by association with CFL2 is reported conflictingly: Shown to enhance CFL2-mediated F-actin depolymerization dependent on the CSRP3:CFL2 molecular ratio, and also shown to reduce the ability of CLF1 and CFL2 to enhance actin depolymerization. Proposed to contribute to the maintenance of muscle cell integrity through an actin-based mechanism. Can directly bind to actin filaments, cross-link actin filaments into bundles without polarity selectivity and protect them from dilution- and cofilin-mediated depolymerization; the function seems to involve its self-association. In vitro can inhibit PKC/PRKCA activity. Proposed to be involved in cardiac stress signaling by down-regulating excessive PKC/PRKCA signaling. May play a role in early sarcomere organization. Overexpression in myotubes negatively regulates myotube differentiation. By association with isoform 1 and thus changing the CSRP3 isoform 1:CFL2 stoichiometry is proposed to down-regulate CFL2-mediated F-actin depolymerization. The chain is Cysteine and glycine-rich protein 3 (CSRP3) from Homo sapiens (Human).